We begin with the raw amino-acid sequence, 157 residues long: 2-C-methyl-D-erythritol 2,4-cyclodiphosphate synthase (157 aa).

A divalent metal cation is bound by residues aspartate 8 and histidine 10. Residues aspartate 8–histidine 10 and histidine 34–serine 35 contribute to the 4-CDP-2-C-methyl-D-erythritol 2-phosphate site. Position 42 (histidine 42) interacts with a divalent metal cation. Residues aspartate 56 to glycine 58, phenylalanine 61 to aspartate 65, threonine 132 to glutamate 135, and phenylalanine 139 each bind 4-CDP-2-C-methyl-D-erythritol 2-phosphate.

This sequence belongs to the IspF family. Homotrimer. The cofactor is a divalent metal cation.

It carries out the reaction 4-CDP-2-C-methyl-D-erythritol 2-phosphate = 2-C-methyl-D-erythritol 2,4-cyclic diphosphate + CMP. It participates in isoprenoid biosynthesis; isopentenyl diphosphate biosynthesis via DXP pathway; isopentenyl diphosphate from 1-deoxy-D-xylulose 5-phosphate: step 4/6. Its function is as follows. Involved in the biosynthesis of isopentenyl diphosphate (IPP) and dimethylallyl diphosphate (DMAPP), two major building blocks of isoprenoid compounds. Catalyzes the conversion of 4-diphosphocytidyl-2-C-methyl-D-erythritol 2-phosphate (CDP-ME2P) to 2-C-methyl-D-erythritol 2,4-cyclodiphosphate (ME-CPP) with a corresponding release of cytidine 5-monophosphate (CMP). The sequence is that of 2-C-methyl-D-erythritol 2,4-cyclodiphosphate synthase from Clostridium botulinum (strain Alaska E43 / Type E3).